The chain runs to 630 residues: Forkhead box protein O (630 aa).

Residues 1-45 are disordered; that stretch reads MDGFVQEWSNLPRSDNGLHMDQLVGELPTDGGFEPQTRARSNTWP. The residue at position 43 (threonine 43) is a Phosphothreonine; by PKB/AKT1. The fork-head DNA-binding region spans 92-198; it reads WGNLSYADLI…ETSRYEKRRG (107 aa). Serine 187 is modified (phosphoserine; by PKB/AKT1). The interval 214–260 is disordered; that stretch reads GLNDATPSPSSSVSEGLDHFPESPLHSGGFQLSPDFRQRASSNASSC. Polar residues predominate over residues 218 to 227; the sequence is ATPSPSSSVS. Position 255 is a phosphoserine; by PKB/AKT1 (serine 255). A phosphoserine mark is found at serine 258, serine 259, and serine 264. 2 disordered regions span residues 318 to 379 and 403 to 432; these read SAAS…QQQQ and TRDG…SLNT. 2 stretches are compositionally biased toward low complexity: residues 332–350 and 367–379; these read QQQQ…QLPQ and QPQA…QQQQ. Polar residues-rich tracts occupy residues 408 to 417 and 423 to 432; these read SPNSVTTTMS and SEPSSDSLNT.

Interacts with melt.

It is found in the cytoplasm. The protein resides in the nucleus. Its function is as follows. Transcription factor involved in the regulation of the insulin signaling pathway. Consistently activates both the downstream target Thor\d4EBP and the feedback control target InR. Involved in negative regulation of the cell cycle, modulating cell growth and proliferation. In response to cellular stresses, such as nutrient deprivation or increased levels of reactive oxygen species, foxo is activated and inhibits growth through the action of target genes such as Thor. Foxo activated in the adult fat body can regulate lifespan in adults; an insulin peptide itself may function as one secondary messenger of insulin-regulated aging. Also regulates Lip4, homolog of human acid lipases, thereby acting as a key modulator of lipid metabolism by insulin signaling and integrates insulin responses to glucose and lipid homeostasis. The chain is Forkhead box protein O from Drosophila grimshawi (Hawaiian fruit fly).